Here is a 180-residue protein sequence, read N- to C-terminus: Small ribosomal subunit protein uS4 (180 aa).

In terms of domain architecture, S4 RNA-binding spans 103–174; the sequence is RRLQTIVYKK…HPERMMIEKA (72 aa).

This sequence belongs to the universal ribosomal protein uS4 family. In terms of assembly, part of the 30S ribosomal subunit. Contacts protein S5. The interaction surface between S4 and S5 is involved in control of translational fidelity.

In terms of biological role, one of the primary rRNA binding proteins, it binds directly to 16S rRNA where it nucleates assembly of the body of the 30S subunit. With S5 and S12 plays an important role in translational accuracy. The protein is Small ribosomal subunit protein uS4 of Pyrococcus abyssi (strain GE5 / Orsay).